The sequence spans 663 residues: MVVNSQAFLLALIALLATQLPSLMAADCPLDFSGSNFTLVATVCSNITNRGKCCRYMNAFVAVSVARYANLSTNLGVTSDLSETCIASISRAMEGYGVSRNATSFCGLGTKILVKYDCDGRTTVTQMHQSPGFGHVSRNCRLPFSPGHQCRKCLNSGITYLRNLIGAETNNITLCTCRDATYATLASRIDDTSALELLSCFFQVTELNIPSESFSPVASPEPSPSTVGGISPSNSDSQMTTSRSTNPYHLTMVPTIGIVVTAVALTMLVVLVILIRRKNRELDESESLDRKSTKSVPSSLPVFKIHEDDSSSAFRKFSYKEMTNATNDFNTVIGQGGFGTVYKAEFNDGLIAAVKKMNKVSEQAEQDFCREIGLLAKLHHRNLVALKGFCINKKERFLVYDYMKNGSLKDHLHAIGKPPPSWGTRMKIAIDVANALEYLHFYCDPPLCHRDIKSSNILLDENFVAKLSDFGLAHSSRDGSVCFEPVNTDIRGTPGYVDPEYVVTQELTEKSDVYSYGVVLLELITGRRAVDEGRNLVEMSQRFLLAKSKHLELVDPRIKDSINDAGGKQLDAVVTVVRLCTEKEGRSRPSIKQVLRLLCESCDPVHSAFAKAVEEEIGWDSRKRSNLRIQRGDSRIFGPSSSTTSRSHYSRSLPHSPINGFSF.

The signal sequence occupies residues 1-25 (MVVNSQAFLLALIALLATQLPSLMA). Residues 26–254 (ADCPLDFSGS…TNPYHLTMVP (229 aa)) lie on the Extracellular side of the membrane. 5 N-linked (GlcNAc...) asparagine glycosylation sites follow: Asn-36, Asn-46, Asn-70, Asn-101, and Asn-171. Positions 213 to 243 (SFSPVASPEPSPSTVGGISPSNSDSQMTTSR) are disordered. Polar residues predominate over residues 224–243 (PSTVGGISPSNSDSQMTTSR). Residues 255–275 (TIGIVVTAVALTMLVVLVILI) form a helical membrane-spanning segment. At 276–663 (RRKNRELDES…PHSPINGFSF (388 aa)) the chain is on the cytoplasmic side. The Protein kinase domain maps to 327 to 609 (NDFNTVIGQG…ESCDPVHSAF (283 aa)). Residues 333-341 (IGQGGFGTV) and Lys-355 each bind ATP. Catalysis depends on Asp-451, which acts as the Proton acceptor. A disordered region spans residues 631–663 (RGDSRIFGPSSSTTSRSHYSRSLPHSPINGFSF). The segment covering 640 to 652 (SSSTTSRSHYSRS) has biased composition (low complexity).

It belongs to the protein kinase superfamily. Ser/Thr protein kinase family.

It localises to the cell membrane. It carries out the reaction L-seryl-[protein] + ATP = O-phospho-L-seryl-[protein] + ADP + H(+). It catalyses the reaction L-threonyl-[protein] + ATP = O-phospho-L-threonyl-[protein] + ADP + H(+). This chain is Probable receptor-like protein kinase At1g49730, found in Arabidopsis thaliana (Mouse-ear cress).